A 515-amino-acid chain; its full sequence is MLQPYKHEPFTDFTVEANRKAFEEALGLVEKELGKEYPLIINGERVTTEDKIQSWNPARKDQLVGSVSKANQDLAEKAIQSADEAFQTWRNVNPEERANILVKAAAIIRRRKHEFSAWLVHEAGKPWKEADADTAEAIDFLEYYARQMIELNRGKEILSRPGEQNRYFYTPMGVTVTISPWNFALAIMVGTAVAPIVTGNTVVLKPASTTPVVAAKFVEVLEDAGLPKGVINYVPGSGAEVGDYLVDHPKTSLITFTGSKDVGVRLYERAAVVRPGQNHLKRVIVEMGGKDTVVVDRDADLDLAAESILVSAFGFSGQKCSAGSRAVIHKDVYDEVLEKTVALAKNLTVGDPTNRDNYMGPVIDEKAFEKIMSYIEIGKKEGRLMTGGEGDSSTGFFIQPTIIADLDPEAVIMQEEIFGPVVAFSKANDFDHALEIANNTEYGLTGAVITRNRAHIEQAKREFHVGNLYFNRNCTGAIVGYHPFGGFKMSGTDSKAGGPDYLALHMQAKTVSEMY.

Catalysis depends on residues E286 and C320.

Belongs to the aldehyde dehydrogenase family. RocA subfamily.

The catalysed reaction is L-glutamate 5-semialdehyde + NAD(+) + H2O = L-glutamate + NADH + 2 H(+). It participates in amino-acid degradation; L-proline degradation into L-glutamate; L-glutamate from L-proline: step 2/2. This is 1-pyrroline-5-carboxylate dehydrogenase 1 (rocA1) from Halalkalibacterium halodurans (strain ATCC BAA-125 / DSM 18197 / FERM 7344 / JCM 9153 / C-125) (Bacillus halodurans).